The chain runs to 377 residues: UPF0754 membrane protein LMHCC_0318 (377 aa).

2 consecutive transmembrane segments (helical) span residues 1–21 and 357–377; these read MSVLFTILLMAVIGGFIGAMT and YLGGILGGFIGVIQGILAMWI.

This sequence belongs to the UPF0754 family.

The protein resides in the cell membrane. This is UPF0754 membrane protein LMHCC_0318 from Listeria monocytogenes serotype 4a (strain HCC23).